Reading from the N-terminus, the 412-residue chain is Palmitoyltransferase ZDHHC11 (412 aa).

Residues 1-42 (MDTRSGSQCSVTPEAILNNEKLVLPPRISRVNGWSLPLHYFQ) lie on the Cytoplasmic side of the membrane. The chain crosses the membrane as a helical span at residues 43–63 (VVTWAVFVGLSSATFGIFIPF). The Lumenal portion of the chain corresponds to 64 to 69 (LPHAWK). A helical transmembrane segment spans residues 70–90 (YIAYVVTGGIFSFHLVVHLIA). Topologically, residues 91 to 176 (SCIDPADSNV…YWFFFSTVAS (86 aa)) are cytoplasmic. The DHHC domain maps to 125 to 175 (QFCHLCKVTVNKKTKHCISCNKCVSGFDHHCKWINNCVGSRNYWFFFSTVA). The S-palmitoyl cysteine intermediate role is filled by Cys-155. The helical transmembrane segment at 177 to 197 (ATAGMLCLIAILLYVLVQYLV) threads the bilayer. Topologically, residues 198-230 (NPGVLRTDPRYEDVKNMNTWLLFLPLFPVQVQT) are lumenal. Residues 198–412 (NPGVLRTDPR…MKTDSAESED (215 aa)) form a mediates interaction with IRF3 and STING1 region. A helical membrane pass occupies residues 231 to 251 (LIVVIIGMLVLLLDFLGLVHL). The Cytoplasmic segment spans residues 252–412 (GQLLIFHIYL…MKTDSAESED (161 aa)). The segment at 374–412 (HPDGGSMAQEADDAPSISTLGLQQETTEPMKTDSAESED) is disordered. Over residues 389-400 (SISTLGLQQETT) the composition is skewed to polar residues. Over residues 401 to 412 (EPMKTDSAESED) the composition is skewed to basic and acidic residues.

It belongs to the DHHC palmitoyltransferase family. As to quaternary structure, interacts with IRF3 and STING1; in presence of DNA viruses recruits IRF3 to STING1 promoting IRF3 phosphorylation and activation. Expressed in testis.

It is found in the endoplasmic reticulum membrane. It carries out the reaction L-cysteinyl-[protein] + hexadecanoyl-CoA = S-hexadecanoyl-L-cysteinyl-[protein] + CoA. Functionally, endoplasmic reticulum-localized palmitoyltransferase that could catalyze the addition of palmitate onto various protein substrates and be involved in a variety of cellular processes. Has a palmitoyltransferase activity toward NCDN and regulates NCDN association with endosome membranes through this palmitoylation. May play a role in cell proliferation. Its function is as follows. Also has a palmitoyltransferase activity-independent function in DNA virus-triggered and CGAS-mediated innate immune response. Functions as an adapter that recruits IRF3 to STING1 to promote the activation of that key transcriptional regulator of type I interferon (IFN)-dependent immune response. This Homo sapiens (Human) protein is Palmitoyltransferase ZDHHC11.